We begin with the raw amino-acid sequence, 570 residues long: Proline--tRNA ligase (570 aa).

Belongs to the class-II aminoacyl-tRNA synthetase family. ProS type 1 subfamily. In terms of assembly, homodimer.

Its subcellular location is the cytoplasm. It catalyses the reaction tRNA(Pro) + L-proline + ATP = L-prolyl-tRNA(Pro) + AMP + diphosphate. Functionally, catalyzes the attachment of proline to tRNA(Pro) in a two-step reaction: proline is first activated by ATP to form Pro-AMP and then transferred to the acceptor end of tRNA(Pro). As ProRS can inadvertently accommodate and process non-cognate amino acids such as alanine and cysteine, to avoid such errors it has two additional distinct editing activities against alanine. One activity is designated as 'pretransfer' editing and involves the tRNA(Pro)-independent hydrolysis of activated Ala-AMP. The other activity is designated 'posttransfer' editing and involves deacylation of mischarged Ala-tRNA(Pro). The misacylated Cys-tRNA(Pro) is not edited by ProRS. The sequence is that of Proline--tRNA ligase from Thermoanaerobacter pseudethanolicus (strain ATCC 33223 / 39E) (Clostridium thermohydrosulfuricum).